A 183-amino-acid polypeptide reads, in one-letter code: Nucleoplasmin-like protein NO29 (183 aa).

The segment covering 126–166 (SDDEDLSGSEEEMEDEEEEEDDDDDDDDDDDDDDDDDEEEI) has biased composition (acidic residues). A disordered region spans residues 126-183 (SDDEDLSGSEEEMEDEEEEEDDDDDDDDDDDDDDDDDEEEITPIKPAKKPLKTLSRTF).

The protein belongs to the nucleoplasmin family.

The protein localises to the nucleus. The protein resides in the nucleolus. In Xenopus laevis (African clawed frog), this protein is Nucleoplasmin-like protein NO29.